Here is a 140-residue protein sequence, read N- to C-terminus: Profilin-1 (140 aa).

A2 carries the post-translational modification N-acetylalanine. S28 carries the post-translational modification Phosphoserine. K54 is covalently cross-linked (Glycyl lysine isopeptide (Lys-Gly) (interchain with G-Cter in SUMO2); alternate). Residue K54 forms a Glycyl lysine isopeptide (Lys-Gly) (interchain with G-Cter in ubiquitin); alternate linkage. 2 positions are modified to phosphoserine: S57 and S85. 2 positions are modified to N6-acetyllysine: K105 and K108. Y129 is subject to Phosphotyrosine. S138 is modified (phosphoserine; by ROCK1).

Belongs to the profilin family. As to quaternary structure, found in a complex with XPO6, Ran, ACTB and PFN1. Interacts with ACTB. Interacts with VASP. Interacts with HTT. Interacts with SH3BGRL. Occurs in many kinds of cells as a complex with monomeric actin in a 1:1 ratio. Interacts with ACTMAP. Phosphorylation at Ser-138 reduces its affinity for G-actin and blocks its interaction with HTT, reducing its ability to inhibit androgen receptor (AR) and HTT aggregation. In terms of tissue distribution, expressed in epididymis (at protein level).

The protein localises to the cytoplasm. It localises to the cytoskeleton. Binds to actin and affects the structure of the cytoskeleton. At high concentrations, profilin prevents the polymerization of actin, whereas it enhances it at low concentrations. By binding to PIP2, it inhibits the formation of IP3 and DG. Inhibits androgen receptor (AR) and HTT aggregation and binding of G-actin is essential for its inhibition of AR. This Homo sapiens (Human) protein is Profilin-1 (PFN1).